We begin with the raw amino-acid sequence, 148 residues long: MMKELFRKRSIHVCVVNTGGCNGCDIEIVACLAPRYDIEQYGIYVHNNPREADVLLVTGPVTLQWAERLKEIYEKTPEPKIVVAVGACALSGGIFKEGHVVGGVDKVIPVDAKIPGCPPRPSEIIETILKVAPKAIAMREKRLKNKDE.

Residues Cys-21, Cys-24, Cys-88, and Cys-117 each contribute to the [4Fe-4S] cluster site.

This sequence belongs to the complex I 20 kDa subunit family. [4Fe-4S] cluster serves as cofactor.

This is an uncharacterized protein from Methanocaldococcus jannaschii (strain ATCC 43067 / DSM 2661 / JAL-1 / JCM 10045 / NBRC 100440) (Methanococcus jannaschii).